A 313-amino-acid chain; its full sequence is Acetyl-coenzyme A carboxylase carboxyl transferase subunit alpha (313 aa).

The CoA carboxyltransferase C-terminal domain maps to 30–291; that stretch reads DLDREISDLE…KMALLQELAF (262 aa).

It belongs to the AccA family. Acetyl-CoA carboxylase is a heterohexamer composed of biotin carboxyl carrier protein (AccB), biotin carboxylase (AccC) and two subunits each of ACCase subunit alpha (AccA) and ACCase subunit beta (AccD).

Its subcellular location is the cytoplasm. The catalysed reaction is N(6)-carboxybiotinyl-L-lysyl-[protein] + acetyl-CoA = N(6)-biotinyl-L-lysyl-[protein] + malonyl-CoA. It functions in the pathway lipid metabolism; malonyl-CoA biosynthesis; malonyl-CoA from acetyl-CoA: step 1/1. Component of the acetyl coenzyme A carboxylase (ACC) complex. First, biotin carboxylase catalyzes the carboxylation of biotin on its carrier protein (BCCP) and then the CO(2) group is transferred by the carboxyltransferase to acetyl-CoA to form malonyl-CoA. The protein is Acetyl-coenzyme A carboxylase carboxyl transferase subunit alpha of Zymomonas mobilis subsp. mobilis (strain ATCC 31821 / ZM4 / CP4).